A 61-amino-acid chain; its full sequence is RQRHPDCDKPPDTKRCTGHNPAFYYNPRRKNCERFSYGGCGGNGNHFKTKQLCHCHCHEND.

Positions 7–57 (CDKPPDTKRCTGHNPAFYYNPRRKNCERFSYGGCGGNGNHFKTKQLCHCHC) constitute a BPTI/Kunitz inhibitor domain. 3 cysteine pairs are disulfide-bonded: Cys-7–Cys-57, Cys-16–Cys-40, and Cys-32–Cys-53.

It belongs to the venom Kunitz-type family. Heterodimer; disulfide-linked. The A chains have phospholipase A2 activity and the B chains show homology with the basic protease inhibitors. Expressed by the venom gland.

The protein localises to the secreted. Beta-bungarotoxins are presynaptic neurotoxins of the venom. The B chain is homologous to venom basic protease inhibitors but has no protease inhibitor activity and blocks voltage-gated potassium channels (Kv). The sequence is that of Kunitz-type serine protease inhibitor homolog beta-bungarotoxin B5-B chain from Bungarus multicinctus (Many-banded krait).